A 386-amino-acid chain; its full sequence is ADP,ATP carrier protein 1, mitochondrial (386 aa).

Residues 1–76 constitute a mitochondrion transit peptide; sequence MDQVQHPSVM…PSTASAICVQ (76 aa). 3 Solcar repeats span residues 84 to 177, 189 to 281, and 289 to 375; these read SSFA…FKRL, KWFA…LKPV, and DSFF…LQLI. 5 consecutive transmembrane segments (helical) span residues 86–113, 154–178, 187–207, 257–278, and 292–312; these read FAIDFLMGGVSAAVSKTAAAPIERVKLL, TANVIRYFPTQALNFAFKDYFKRLF, YWKWFAGNLASGGAAGASSLL, FNISCVGIIVYRGLYFGMYDSL, and FASFVLGWLITNGAALASYPI. The ADP site is built by Arg159 and Lys171. Arg316 contacts ADP. Residues 316-321 form an important for transport activity region; it reads RRRMMM. A Nucleotide carrier signature motif motif is present at residues 316-321; sequence RRRMMM. Residues 352-372 form a helical membrane-spanning segment; that stretch reads AGSNILRAIAGAGVLAGYDKL.

This sequence belongs to the mitochondrial carrier (TC 2.A.29) family. In terms of assembly, monomer.

It is found in the mitochondrion inner membrane. It carries out the reaction ADP(in) + ATP(out) = ADP(out) + ATP(in). With respect to regulation, the matrix-open state (m-state) is inhibited by the membrane-permeable bongkrekic acid (BKA). The cytoplasmic-open state (c-state) is inhibited by the membrane-impermeable toxic inhibitor carboxyatractyloside (CATR). Its function is as follows. ADP:ATP antiporter that mediates import of ADP into the mitochondrial matrix for ATP synthesis, and export of ATP out to fuel the cell. Cycles between the cytoplasmic-open state (c-state) and the matrix-open state (m-state): operates by the alternating access mechanism with a single substrate-binding site intermittently exposed to either the cytosolic (c-state) or matrix (m-state) side of the inner mitochondrial membrane. This chain is ADP,ATP carrier protein 1, mitochondrial (ANT1), found in Gossypium hirsutum (Upland cotton).